The chain runs to 298 residues: RNA exonuclease 4 (298 aa).

Residues 1-73 (MRKTVRKNKQ…EAKLKLKSAT (73 aa)) are a coiled coil. Positions 125-275 (FFSIDCKIIE…RDTIINVILY (151 aa)) constitute an Exonuclease domain.

The protein belongs to the REXO4 family.

Its subcellular location is the nucleus. This chain is RNA exonuclease 4 (rexo4), found in Dictyostelium discoideum (Social amoeba).